A 200-amino-acid chain; its full sequence is MPKIKICGLKREEDVSFVNIAKPDYAGFVFAGVKRKIDFNTAVRFRSLLDDTIQSVGVFVNDKIDNIVNLCEDKTIDLVQLHGGEDESYIGRLKERIKKPVVKAVRVKDKIYSAATKADFMLFDTYSSFEYGGSGKIFDWDLLKEFRNPFFLAGGLNRDNIAEAVKKLNPYCVDLSSGVETNGVKDLNKIIETVKILRSL.

This sequence belongs to the TrpF family.

The enzyme catalyses N-(5-phospho-beta-D-ribosyl)anthranilate = 1-(2-carboxyphenylamino)-1-deoxy-D-ribulose 5-phosphate. It participates in amino-acid biosynthesis; L-tryptophan biosynthesis; L-tryptophan from chorismate: step 3/5. This chain is N-(5'-phosphoribosyl)anthranilate isomerase, found in Endomicrobium trichonymphae.